Reading from the N-terminus, the 421-residue chain is Testin (421 aa).

The PET domain occupies 92–199; it reads MILTNPVAAK…GDVKLPCEMD (108 aa). A disordered region spans residues 133–164; sequence EKQPVAGSEGAQYRKKQLAKQLPAHDQDPSKC. Residues 155–164 are compositionally biased toward basic and acidic residues; that stretch reads PAHDQDPSKC. 3 LIM zinc-binding domains span residues 234–297, 299–359, and 362–421; these read YSCY…CDSE, PRCA…NHAV, and QGCH…KMMS.

Belongs to the prickle / espinas / testin family. As to quaternary structure, interacts via LIM domain 1 with ZYX. Interacts (via LIM domain 3) with ENAH and VASP. Interacts with ALKBH4, talin, actin, alpha-actinin, GRIP1 and PXN. Interacts (via LIM domain 2) with ACTL7A (via N-terminus). Heterodimer with ACTL7A; the heterodimer interacts with ENAH to form a heterotrimer.

It is found in the cytoplasm. The protein localises to the cell junction. The protein resides in the focal adhesion. Functionally, scaffold protein that may play a role in cell adhesion, cell spreading and in the reorganization of the actin cytoskeleton. Plays a role in the regulation of cell proliferation. May act as a tumor suppressor. This is Testin (TES) from Aotus nancymaae (Ma's night monkey).